Consider the following 306-residue polypeptide: ATP-dependent (S)-NAD(P)H-hydrate dehydratase (306 aa).

One can recognise a YjeF C-terminal domain in the interval 4 to 300; that stretch reads LIDLFKPMIP…NQISNGFEDL (297 aa). (6S)-NADPHX-binding positions include Gly-104 and 157–163; that span reads NFVEFKS. ATP-binding positions include 197-201 and 216-225; these read KGKED and GMPRRCGGQG. Asp-226 serves as a coordination point for (6S)-NADPHX.

This sequence belongs to the NnrD/CARKD family. Mg(2+) is required as a cofactor.

It carries out the reaction (6S)-NADHX + ATP = ADP + phosphate + NADH + H(+). The enzyme catalyses (6S)-NADPHX + ATP = ADP + phosphate + NADPH + H(+). In terms of biological role, catalyzes the dehydration of the S-form of NAD(P)HX at the expense of ATP, which is converted to ADP. Together with NAD(P)HX epimerase, which catalyzes the epimerization of the S- and R-forms, the enzyme allows the repair of both epimers of NAD(P)HX, a damaged form of NAD(P)H that is a result of enzymatic or heat-dependent hydration. This Dictyostelium discoideum (Social amoeba) protein is ATP-dependent (S)-NAD(P)H-hydrate dehydratase.